Consider the following 62-residue polypeptide: Large ribosomal subunit protein bL28 (62 aa).

A disordered region spans residues Met1–Lys26. Positions Ser11–His20 are enriched in polar residues.

This sequence belongs to the bacterial ribosomal protein bL28 family.

The chain is Large ribosomal subunit protein bL28 from Exiguobacterium sp. (strain ATCC BAA-1283 / AT1b).